The sequence spans 409 residues: Na(+)-translocating NADH-quinone reductase subunit F (409 aa).

The chain crosses the membrane as a helical span at residues 5–25 (FIFGIGAFTAIVLVLAVVILI). The 95-residue stretch at 34-128 (GDITISINND…SMDVELPEEV (95 aa)) folds into the 2Fe-2S ferredoxin-type domain. Residues cysteine 71, cysteine 77, cysteine 80, and cysteine 112 each coordinate [2Fe-2S] cluster. An FAD-binding FR-type domain is found at 131–271 (VKKWECTVIS…SGPFGEFFAK (141 aa)).

This sequence belongs to the NqrF family. Composed of six subunits; NqrA, NqrB, NqrC, NqrD, NqrE and NqrF. The cofactor is [2Fe-2S] cluster. It depends on FAD as a cofactor.

The protein resides in the cell inner membrane. The enzyme catalyses a ubiquinone + n Na(+)(in) + NADH + H(+) = a ubiquinol + n Na(+)(out) + NAD(+). Functionally, NQR complex catalyzes the reduction of ubiquinone-1 to ubiquinol by two successive reactions, coupled with the transport of Na(+) ions from the cytoplasm to the periplasm. The first step is catalyzed by NqrF, which accepts electrons from NADH and reduces ubiquinone-1 to ubisemiquinone by a one-electron transfer pathway. In Mannheimia succiniciproducens (strain KCTC 0769BP / MBEL55E), this protein is Na(+)-translocating NADH-quinone reductase subunit F.